We begin with the raw amino-acid sequence, 726 residues long: MAR-binding filament-like protein 1 (726 aa).

Residues 1–41 (MGFLIGGSCFVPSVPLHSRFLSSPSSSSSSSPSSSQFGLLC) constitute a chloroplast transit peptide. The transit peptide at 42-95 (SSNVAKFKRRRPTLASLNQEDGYEYDVASAKRRAFLLVGISVLPFLQLRSPALA) directs the protein to the thylakoid. Topologically, residues 96-124 (DERGNEIKTSKVDLETEVAVVSEGTSPNP) are lumenal, thylakoid. A helical membrane pass occupies residues 125 to 145 (FLALLNGLGIFSAGVLGALYA). The stretch at 144-691 (YALARQDTKA…KGEILRMRSQ (548 aa)) forms a coiled coil. Topologically, residues 146 to 726 (LARQDTKAAE…VRRRKSSTSS (581 aa)) are stromal. The tract at residues 678-726 (LGSAKGEILRMRSQPDSVKAVNSTDNKEKSDNTVTVKKVVRRRKSSTSS) is disordered. Residues 691 to 701 (QPDSVKAVNST) are compositionally biased toward polar residues. Residues 715-722 (KVVRRRKS) carry the Nuclear localization signal motif. Basic residues predominate over residues 715–726 (KVVRRRKSSTSS).

In terms of assembly, interacts with PTST2; the interaction is essential for the initiation of starch granules biosynthesis in leaf chloroplasts, for the correct location of the process in the stromal spaces between the thylakoid membranes, and for the association of PTST2 with the thylakoid membranes. In terms of processing, predicted to be translocated into the thylakoid by the Tat system. The position of the transit peptide cleavages have not been experimentally proven.

Its subcellular location is the plastid. It is found in the chloroplast. It localises to the chloroplast thylakoid membrane. The protein resides in the chloroplast stroma. The protein localises to the chloroplast nucleoid. Its subcellular location is the nucleus. It is found in the nucleus matrix. DNA-binding protein required for the initiation of starch granules biosynthesis in leaf chloroplasts. Anchored to the thylakoid membranes with its C-terminus facing into the stroma where it is essential for localizing PTST2 and SS4 to the stromal spaces between the thylakoid membranes in order to begin starch granule formation. Associated with leaf chloroplastic nucleoids in vivo. Binds to various chloroplastic double-stranded DNA fragments without particular sequence specificity in vitro. May function at the interface between nucleoids and thylakoids possibly by anchoring nucleoids to the thylakoid membrane system in mature chloroplasts. Likely to participate in nuclear architecture by connecting chromatin with the nuclear matrix and potentially with the nuclear envelope. This chain is MAR-binding filament-like protein 1, found in Arabidopsis thaliana (Mouse-ear cress).